A 173-amino-acid polypeptide reads, in one-letter code: Co-chaperone protein HscB homolog (173 aa).

Residues 5–77 (CHYALFDLQP…PRRARYLLAI (73 aa)) form the J domain.

It belongs to the HscB family. As to quaternary structure, interacts with HscA and stimulates its ATPase activity.

Its function is as follows. Co-chaperone involved in the maturation of iron-sulfur cluster-containing proteins. Seems to help targeting proteins to be folded toward HscA. This is Co-chaperone protein HscB homolog from Pseudomonas putida (strain GB-1).